The following is a 131-amino-acid chain: Small ribosomal subunit protein eS24 (131 aa).

M1 carries the N-acetylmethionine modification. T9 is modified (phosphothreonine). K37 participates in a covalent cross-link: Glycyl lysine isopeptide (Lys-Gly) (interchain with G-Cter in SUMO2). The segment covering 90–100 (RLARHGLYEKK) has biased composition (basic and acidic residues). Residues 90–131 (RLARHGLYEKKKTSRKQRKERKNRMKKVRGTAKANVGAGKKK) are disordered. Residues 101–119 (KTSRKQRKERKNRMKKVRG) are compositionally biased toward basic residues.

The protein belongs to the eukaryotic ribosomal protein eS24 family. Component of the small ribosomal subunit. Part of the small subunit (SSU) processome, composed of more than 70 proteins and the RNA chaperone small nucleolar RNA (snoRNA) U3.

It is found in the cytoplasm. It localises to the nucleus. Its subcellular location is the nucleolus. Component of the small ribosomal subunit. The ribosome is a large ribonucleoprotein complex responsible for the synthesis of proteins in the cell. Required for processing of pre-rRNA and maturation of 40S ribosomal subunits. Part of the small subunit (SSU) processome, first precursor of the small eukaryotic ribosomal subunit. During the assembly of the SSU processome in the nucleolus, many ribosome biogenesis factors, an RNA chaperone and ribosomal proteins associate with the nascent pre-rRNA and work in concert to generate RNA folding, modifications, rearrangements and cleavage as well as targeted degradation of pre-ribosomal RNA by the RNA exosome. The chain is Small ribosomal subunit protein eS24 (RPS24) from Pongo abelii (Sumatran orangutan).